A 96-amino-acid chain; its full sequence is Small ribosomal subunit protein bS6 (96 aa).

The protein belongs to the bacterial ribosomal protein bS6 family.

Its function is as follows. Binds together with bS18 to 16S ribosomal RNA. This is Small ribosomal subunit protein bS6 from Acidothermus cellulolyticus (strain ATCC 43068 / DSM 8971 / 11B).